Consider the following 129-residue polypeptide: Small ribosomal subunit protein uS9 (129 aa).

The span at 104–113 shows a compositional bias: basic and acidic residues; it reads TRDSRVVERK. The segment at 104 to 129 is disordered; that stretch reads TRDSRVVERKKPGKRKARRSRQFSKR. Positions 114–129 are enriched in basic residues; sequence KPGKRKARRSRQFSKR.

Belongs to the universal ribosomal protein uS9 family.

This chain is Small ribosomal subunit protein uS9, found in Sulfurimonas denitrificans (strain ATCC 33889 / DSM 1251) (Thiomicrospira denitrificans (strain ATCC 33889 / DSM 1251)).